A 702-amino-acid polypeptide reads, in one-letter code: Polyribonucleotide nucleotidyltransferase (702 aa).

Asp484 and Asp490 together coordinate Mg(2+). Residues 551–610 (PHIESFKIAVEKIGALIGPGGKTVKSLSDQYRVTINTDSDGTVTVSGRDAQSVFDAKVAV) form the KH domain. An S1 motif domain is found at 620 to 688 (GRVYQGVVKR…RMGRLNLSYI (69 aa)).

This sequence belongs to the polyribonucleotide nucleotidyltransferase family. Requires Mg(2+) as cofactor.

It is found in the cytoplasm. The enzyme catalyses RNA(n+1) + phosphate = RNA(n) + a ribonucleoside 5'-diphosphate. Its function is as follows. Involved in mRNA degradation. Catalyzes the phosphorolysis of single-stranded polyribonucleotides processively in the 3'- to 5'-direction. In Treponema pallidum (strain Nichols), this protein is Polyribonucleotide nucleotidyltransferase.